The sequence spans 513 residues: Cytochrome P450 71D445 (513 aa).

Residues 12 to 28 (SEWAITSTITLLFLILL) form a helical; Signal-anchor for type II membrane protein membrane-spanning segment. Cysteine 450 provides a ligand contact to heme.

Belongs to the cytochrome P450 family. Heme is required as a cofactor. In terms of tissue distribution, expressed in mature seeds.

It localises to the membrane. It catalyses the reaction (-)-casbene + reduced [NADPH--hemoprotein reductase] + O2 = 8-hydroxycasbene + oxidized [NADPH--hemoprotein reductase] + H2O + H(+). It carries out the reaction 4-hydroxycasbene + reduced [NADPH--hemoprotein reductase] + O2 = 4,8-dihydroxycasbene + oxidized [NADPH--hemoprotein reductase] + H2O + H(+). The enzyme catalyses 4,8-dihydroxycasbene + reduced [NADPH--hemoprotein reductase] + O2 = 4,5,8-trihydroxycasbene + oxidized [NADPH--hemoprotein reductase] + H2O + H(+). Its pathway is secondary metabolite biosynthesis; terpenoid biosynthesis. Involved in the biosynthesis of macrocyclic lathyrane type diterpenoids (also called Euphorbia factors) natural products, including the cyclization route from casbene to jolkinol C, a precursor for ingenol mebutate that is used to treat actinic keratosis, a precancerous skin condition. Catalyzes the hydroxylation of (-)-casbene and 4-hydroxycasbene to produce 8-hydroxycasbene and 4,8-dihydroxycasbene, respectively. Also mediates the formation of 4-hydroxy-8-ketocasbene from 4,8-dihydroxycasbene. Together with ADH1, triggers the biosynthesis of 8-ketocasbene from 8-hydroxycasbene. The chain is Cytochrome P450 71D445 from Euphorbia lathyris (Caper spurge).